The chain runs to 876 residues: MSSGYKPDILWSPHHADRYVICDTELSLYRIGPSGSSETKAGALQLSEETAATLLAINSDTPFMKCVAWYPKHEPECLLAVGHTNGRVVLTSLGQSHNSKSKDLAGKEFVPKHARQCNTLAWNPVDSNWLAAGLDKHRADFSVLIWDISSKFSPEAVPAEKVRLSGDADSGLLVTKPLYELGQNDACLSLCWLPRDHQKLLLAGMHRNLAIFDLRNTSQKTFVNTKAIQGVTVDPHFQDRVASYFEGQVAIWDLRKFEKPVFTLNEQPKPLTKVAWCPTRMGLLATLTRDSNIIRLYDMQHTPMPFGDEVEPTIMERGVQPCSESIISSFAWHPSAQNRMVVVSPSRVMNDFTLFERISLAWSSTTSLMWACGRHLYECAEDSGQAAEAEKDIATKMRERAQSRYGHDTVQVWRNHVLAGGDDPQLRSLWYTLHFMKQYTENVEQKQQSNKQSLIYSGIKNIVKSSSGTTETRRCWSGSDRQTDVPRFHSEERSLALQLCGWISQGPDTDVEPFLKSLEQEGEWERAAAVALFNLDIRRAIQILNKGASSEKGDLNLNVVAMALSGYTDEKNSLWREMCSSLRLQLKKPYLCIMFAFLTSEPGAYDGVLYESRVAVRDRVAFACMFLNDAQLPRYIDKLTNEMKEAGNLEGILLTGLTKDGVDLMESYVDRTGDVQTASFCMLKGSPGEVLKDPRVQCWIENYRNLLDAWRFWHKRAEFDIHRSKLDPSSKPLAQVFVSCNFCGKSISYSCSAMPHQGRGFSQYGVSGSPTKSKVTSCPGCRKPLPRCALCLMNMGTPVSSCPGTGKADEKADLTRDKKLAQFNNWFTWCHNCRHGGHAGHMLSWFRDHSECPVSACTCKCMQLDTTGNLVPSDSV.

6 WD repeats span residues 59–101 (SDTP…NSKS), 112–156 (KHAR…SPEA), 182–222 (GQND…QKTF), 224–262 (NTKA…KPVF), 266–307 (EQPK…MPFG), and 400–440 (RAQS…KQYT). Residues 738 to 784 (VSCNFCGKSISYSCSAMPHQGRGFSQYGVSGSPTKSKVTSCPGCRKP) form a C4-type zinc finger. Positions 740, 743, 778, 781, 791, 830, 833, 835, 838, 841, 852, 857, and 861 each coordinate Zn(2+). An RING-type; atypical zinc finger spans residues 785–866 (LPRCALCLMN…CTCKCMQLDT (82 aa)).

It belongs to the WD repeat mio family. Component of the GATOR2 subcomplex, composed of MIOS, SEC13, SEH1L, WDR24 and WDR59. The GATOR2 complex interacts with CASTOR1 and CASTOR2; the interaction is negatively regulated by arginine. The GATOR2 complex interacts with SESN1, SESN2 and SESN3; the interaction is negatively regulated by amino acids. Interacts with SAR1; the interaction is direct, disrupted by leucine and mediates the interaction of SAR1 with the GATOR2 complex to negatively regulate the TORC1 signaling upon leucine deprivation.

The protein resides in the lysosome membrane. With respect to regulation, the GATOR2 complex is negatively regulated by the upstream amino acid sensors CASTOR1 and SESN2, which sequester the GATOR2 complex in absence of amino acids. In the presence of abundant amino acids, GATOR2 is released from CASTOR1 and SESN2 and activated. Functionally, as a component of the GATOR2 complex, functions as an activator of the amino acid-sensing branch of the mTORC1 signaling pathway. The GATOR2 complex indirectly activates mTORC1 through the inhibition of the GATOR1 subcomplex. GATOR2 probably acts as an E3 ubiquitin-protein ligase toward GATOR1. In the presence of abundant amino acids, the GATOR2 complex mediates ubiquitination of the NPRL2 core component of the GATOR1 complex, leading to GATOR1 inactivation. In the absence of amino acids, GATOR2 is inhibited, activating the GATOR1 complex. Within the GATOR2 complex, MIOS is required to prevent autoubiquitination of WDR24, the catalytic subunit of the complex. The chain is GATOR2 complex protein MIOS from Danio rerio (Zebrafish).